The following is a 151-amino-acid chain: Deazaflavin-dependent nitroreductase (151 aa).

Coenzyme F420-(gamma-Glu)n contacts are provided by residues 54-56 (RKT), 60-65 (RVNPLY), 76-79 (AASK), 87-91 (MWYLN), and Tyr-133.

The protein belongs to the F420H(2)-dependent quinone reductase family.

It localises to the cell membrane. It catalyses the reaction oxidized coenzyme F420-(gamma-L-Glu)(n) + a quinol + H(+) = reduced coenzyme F420-(gamma-L-Glu)(n) + a quinone. Functionally, involved in a F420-dependent anti-oxidant mechanism that protects M.tuberculosis against oxidative stress and bactericidal agents. Catalyzes the F420H(2)-dependent two-electron reduction of quinones to dihydroquinones, thereby preventing the formation of cytotoxic semiquinones obtained by the one-electron reduction pathway. In vitro, catalyzes the reduction of both benzoquinone and naphthoquinone analogs; since menaquinone is the sole quinone electron carrier in the respiratory chain in M.tuberculosis, the physiological electron acceptor for Fqr-mediated F420H(2) oxidation is therefore likely to be the endogenous menaquinone found in the membrane fraction of M.tuberculosis. Is able to use F420 species with two and five glutamate residues in its polyglutamate tail. Cannot use NADH or NADPH instead of F420H(2) as the electron donor. In terms of biological role, is involved in the bioreductive activation of bicyclic 4-nitroimidazole prodrugs such as PA-824 and delamanid developed for anti-tuberculosis therapy against both replicating and persistent bacteria. It converts PA-824 into three primary metabolites resulting from reduction of the imidazole ring at C-3; the major one is the corresponding des-nitroimidazole that generates lethal reactive nitrogen species, including nitric oxide (NO), which appears to be responsible for the anaerobic killing activity. Ddn uses the reduced F420 produced by FGD1 to activate PA-824. Delamanid (OPC-67683) is also reduced by Ddn to its des-nitro form. This Mycobacterium tuberculosis (strain CDC 1551 / Oshkosh) protein is Deazaflavin-dependent nitroreductase (ddn).